We begin with the raw amino-acid sequence, 1241 residues long: eIF-2-alpha kinase GCN2 (1241 aa).

Basic residues predominate over residues 1-15 (MGRSSSKKKKKRGGS). The disordered stretch occupies residues 1 to 33 (MGRSSSKKKKKRGGSGRRGQLKDHGSNADEDNE). Positions 37–148 (EEITALSAIF…EAAQEFLSEI (112 aa)) constitute an RWD domain. The segment at 253-321 (PIAKLNTVQE…SLGSWSSDSL (69 aa)) is disordered. Composition is skewed to low complexity over residues 267-276 (DTSISSFDSS) and 307-321 (NSES…SDSL). Positions 425 to 731 (FEELKPLGQG…ATELLKHAFP (307 aa)) constitute a Protein kinase domain. ATP-binding positions include 431–439 (LGQGGFGHV) and Lys454. Asp586 (proton acceptor) is an active-site residue. The interval 819–1219 (IPMRLLSDCP…ELKKEKVVGR (401 aa)) is histidyl-tRNA synthetase-like.

It belongs to the protein kinase superfamily. Ser/Thr protein kinase family. GCN2 subfamily. Homodimer; homodimerization is important for kinase activation by uncharged tRNAs. As to expression, expressed in roots, leaves, stems, buds, flowers, siliques and seedlings.

It is found in the cytoplasm. It catalyses the reaction L-seryl-[protein] + ATP = O-phospho-L-seryl-[protein] + ADP + H(+). The enzyme catalyses L-threonyl-[protein] + ATP = O-phospho-L-threonyl-[protein] + ADP + H(+). Its activity is regulated as follows. The kinase activity is stimulated upon binding to uncharged tRNAs. Its function is as follows. Metabolic-stress sensing protein kinase that phosphorylates the alpha subunit of eukaryotic translation initiation factor 2 eIF-2-alpha in response to low amino acid availability. Plays a role as an activator of the general amino acid control pathway required for adapatation to amino acid starvation. Converts phosphorylated eIF-2-alpha either to a competitive inhibitor of translation initiation, leading to a global protein synthesis repression, and thus to a reduced overall utilization of amino acids, or to a translational initiation activation of specific mRNAs, and hence allowing reprogramming of amino acid biosynthetic gene expression to alleviate nutrient depletion. Binds uncharged tRNAs. The sequence is that of eIF-2-alpha kinase GCN2 from Arabidopsis thaliana (Mouse-ear cress).